The following is a 316-amino-acid chain: MKIVKISPRGYCYGVVDAMVIARNAALDKSLPRPIYILGMIVHNKHVTDAFEEDGIITLDGPSRLEILDKIDSGTVIFTAHGVSPEVKQRAKEKGLTTIDATCPDVTKTHDLIEAKKAEGYHVIYIGKKNHPEPEGAVGIAPDIVHLIERADDLKTLEIPTDKILVTNQTTMSQWDVQHLMEDIQKKFPTAEFHKEICLATQVRQEAVAKQADVADLTIVVGDPKSNNSNRLAQVSQEIAGTKAYRVADVSEIQLEWLQGVENVAVTAGASTPTPITKEVIAFLEQYNPMNPATWERVRKVPLQKILPRVKVKKEQ.

C12 serves as a coordination point for [4Fe-4S] cluster. The (2E)-4-hydroxy-3-methylbut-2-enyl diphosphate site is built by H43 and H81. Positions 43 and 81 each coordinate dimethylallyl diphosphate. Isopentenyl diphosphate is bound by residues H43 and H81. C103 lines the [4Fe-4S] cluster pocket. Residue H131 participates in (2E)-4-hydroxy-3-methylbut-2-enyl diphosphate binding. H131 is a dimethylallyl diphosphate binding site. H131 lines the isopentenyl diphosphate pocket. Catalysis depends on E133, which acts as the Proton donor. T170 lines the (2E)-4-hydroxy-3-methylbut-2-enyl diphosphate pocket. C198 is a [4Fe-4S] cluster binding site. (2E)-4-hydroxy-3-methylbut-2-enyl diphosphate contacts are provided by S226, N228, and S271. Dimethylallyl diphosphate is bound by residues S226, N228, and S271. S226, N228, and S271 together coordinate isopentenyl diphosphate.

This sequence belongs to the IspH family. [4Fe-4S] cluster serves as cofactor.

It carries out the reaction isopentenyl diphosphate + 2 oxidized [2Fe-2S]-[ferredoxin] + H2O = (2E)-4-hydroxy-3-methylbut-2-enyl diphosphate + 2 reduced [2Fe-2S]-[ferredoxin] + 2 H(+). The catalysed reaction is dimethylallyl diphosphate + 2 oxidized [2Fe-2S]-[ferredoxin] + H2O = (2E)-4-hydroxy-3-methylbut-2-enyl diphosphate + 2 reduced [2Fe-2S]-[ferredoxin] + 2 H(+). Its pathway is isoprenoid biosynthesis; dimethylallyl diphosphate biosynthesis; dimethylallyl diphosphate from (2E)-4-hydroxy-3-methylbutenyl diphosphate: step 1/1. It participates in isoprenoid biosynthesis; isopentenyl diphosphate biosynthesis via DXP pathway; isopentenyl diphosphate from 1-deoxy-D-xylulose 5-phosphate: step 6/6. Its function is as follows. Catalyzes the conversion of 1-hydroxy-2-methyl-2-(E)-butenyl 4-diphosphate (HMBPP) into a mixture of isopentenyl diphosphate (IPP) and dimethylallyl diphosphate (DMAPP). Acts in the terminal step of the DOXP/MEP pathway for isoprenoid precursor biosynthesis. This chain is 4-hydroxy-3-methylbut-2-enyl diphosphate reductase, found in Bacillus cereus (strain B4264).